A 164-amino-acid polypeptide reads, in one-letter code: Peptidyl-prolyl cis-trans isomerase A (164 aa).

N-acetylmethionine is present on M1. An N-acetylvaline; in Peptidyl-prolyl cis-trans isomerase A, N-terminally processed modification is found at V2. The region spanning 7-163 (FFDIAVDGEP…KKITIANCGQ (157 aa)) is the PPIase cyclophilin-type domain. K28 carries the post-translational modification N6-acetyllysine; alternate. Residue K28 forms a Glycyl lysine isopeptide (Lys-Gly) (interchain with G-Cter in SUMO2); alternate linkage. Residue K28 forms a Glycyl lysine isopeptide (Lys-Gly) (interchain with G-Cter in ubiquitin); alternate linkage. 2 positions are modified to N6-acetyllysine: K44 and K76. Phosphoserine is present on S77. Position 82 is an N6-acetyllysine; alternate (K82). A Glycyl lysine isopeptide (Lys-Gly) (interchain with G-Cter in SUMO2); alternate cross-link involves residue K82. The residue at position 93 (T93) is a Phosphothreonine. The N-linked (GlcNAc...) asparagine glycan is linked to N108. K125 and K133 each carry N6-acetyllysine.

This sequence belongs to the cyclophilin-type PPIase family. PPIase A subfamily. As to quaternary structure, interacts with protein phosphatase PPP3CA/calcineurin A. Interacts with isoform 2 of BSG/CD147. Interacts with FOXO1; the interaction promotes FOXO1 dephosphorylation, nuclear accumulation and transcriptional activity. Interacts with integrin ITGA2B:ITGB3; the interaction is ROS and peptidyl-prolyl cis-trans isomerase (PPIase) activity-dependent and is increased in the presence of thrombin. Interacts with MAP3K5. Interacts with TARDBP; the interaction is dependent on the RNA-binding activity of TARDBP and the PPIase activity of PPIA/CYPA and the acetylation of PPIA/CYPA at Lys-125 favors the interaction. Interacts with HNRNPA1, HNRNPA2B1, HNRNPC, RBMX, HNRNPK and HNRNPM. Acetylation at Lys-125 markedly inhibits catalysis of cis to trans isomerization. PPIA acetylation also antagonizes the immunosuppressive effects of cyclosporine by inhibiting the sequential steps of cyclosporine binding and calcineurin inhibition. Acetylation at Lys-125 favors the interaction with TARDBP.

Its subcellular location is the cytoplasm. It is found in the secreted. The protein resides in the nucleus. It carries out the reaction [protein]-peptidylproline (omega=180) = [protein]-peptidylproline (omega=0). Its activity is regulated as follows. Binds cyclosporin A (CsA). CsA mediates some of its effects via an inhibitory action on PPIase. Its function is as follows. Catalyzes the cis-trans isomerization of proline imidic peptide bonds in oligopeptides. Exerts a strong chemotactic effect on leukocytes partly through activation of one of its membrane receptors BSG/CD147, initiating a signaling cascade that culminates in MAPK/ERK activation. Activates endothelial cells (ECs) in a proinflammatory manner by stimulating activation of NF-kappa-B and ERK, JNK and p38 MAP-kinases and by inducing expression of adhesion molecules including SELE and VCAM1. Induces apoptosis in ECs by promoting the FOXO1-dependent expression of CCL2 and BCL2L11 which are involved in EC chemotaxis and apoptosis. In response to oxidative stress, initiates proapoptotic and antiapoptotic signaling in ECs via activation of NF-kappa-B and AKT1 and up-regulation of antiapoptotic protein BCL2. Negatively regulates MAP3K5/ASK1 kinase activity, autophosphorylation and oxidative stress-induced apoptosis mediated by MAP3K5/ASK1. Necessary for the assembly of TARDBP in heterogeneous nuclear ribonucleoprotein (hnRNP) complexes and regulates TARDBP binding to RNA UG repeats and TARDBP-dependent expression of HDAC6, ATG7 and VCP which are involved in clearance of protein aggregates. Plays an important role in platelet activation and aggregation. Regulates calcium mobilization and integrin ITGA2B:ITGB3 bidirectional signaling via increased ROS production as well as by facilitating the interaction between integrin and the cell cytoskeleton. Binds heparan sulfate glycosaminoglycans. The polypeptide is Peptidyl-prolyl cis-trans isomerase A (PPIA) (Oryctolagus cuniculus (Rabbit)).